Consider the following 518-residue polypeptide: Protein PNS1 (518 aa).

A compositionally biased stretch (pro residues) spans 1 to 14 (MSDYPPPNYPPPNH). A disordered region spans residues 1–24 (MSDYPPPNYPPPNHPQYQQQQDET). Residues 1-63 (MSDYPPPNYP…KVEKPKFNDW (63 aa)) are Cytoplasmic-facing. The chain crosses the membrane as a helical span at residues 64-84 (PFAIFFWLVVAGFIAVAGITL). At 85–111 (NALRSTYGFQGGSIYGSGNTFTLNTNT) the chain is on the extracellular side. The helical transmembrane segment at 112 to 132 (IILFAFIIVMAFILSAAIIVF) threads the bilayer. Over 133–139 (ARLAPKA) the chain is Cytoplasmic. A helical membrane pass occupies residues 140–160 (FIVTGVILNVVLGIGTAIFYF). At 161 to 163 (VEK) the chain is on the extracellular side. The helical transmembrane segment at 164 to 184 (YYSAAIVFLIFALFGAWCYWS) threads the bilayer. The Cytoplasmic segment spans residues 185-210 (SRHRIPLSATILTIVIDVMKMYPSTL). Residues 211 to 231 (IASFIGLIFSAAFSALFSIVI) form a helical membrane-spanning segment. The Extracellular portion of the chain corresponds to 232–256 (VATYVKYDPNSNNEACSVGGGSCSK). Residues 257–277 (GKLIGVLVFVFFAGYYISEVI) traverse the membrane as a helical segment. Topologically, residues 278-314 (RNVIHVVIAGIYGTWYYLANSDQGAPKHPALSSLKRA) are cytoplasmic. The chain crosses the membrane as a helical span at residues 315 to 335 (LTYCFGSITFGSLIVSLIQLL). Residues 336–351 (RQFISILRSNFAADGN) lie on the Extracellular side of the membrane. A helical membrane pass occupies residues 352–372 (GWGVCGMIILDFFVGFIDWLV). Topologically, residues 373 to 417 (RYLNKYAYCYVALYGKSYIKSAKDTFDLIRFKGMDALINDMFINT) are cytoplasmic. A helical transmembrane segment spans residues 418 to 438 (ALNLYSLFVAYLVALLAYLYL). Residues 439 to 445 (KFTKPEY) are Extracellular-facing. Residues 446-466 (NSGGAFYAPVIAFAFLIAGQI) form a helical membrane-spanning segment. The Cytoplasmic segment spans residues 467–518 (NRISLTVIESGTATFFVALAKDPEIFQMTNRNRFDDIFRNYPQVLEKITSDH).

It belongs to the CTL (choline transporter-like) family.

The protein resides in the cell membrane. Probably involved in transport through the plasma membrane. The protein is Protein PNS1 (PNS1) of Candida albicans (strain SC5314 / ATCC MYA-2876) (Yeast).